Consider the following 408-residue polypeptide: Centromere protein U (408 aa).

Residues 1–33 (DRPRPARLSHARFSKNHSGRTHSMKDKAGRKHR) show a composition bias toward basic residues. The interval 1 to 218 (DRPRPARLSH…GKRKKPRSYT (218 aa)) is disordered. Threonine 72 carries the post-translational modification Phosphothreonine; by PLK1. At threonine 92 the chain carries Phosphothreonine. Basic and acidic residues predominate over residues 94–103 (QEKEAKRSSD). Residue serine 102 is modified to Phosphoserine. Threonine 104 bears the Phosphothreonine mark. 3 positions are modified to phosphoserine: serine 105, serine 110, and serine 114. Residues 118 to 127 (SAKKPRRKLK) are compositionally biased toward basic residues. Residues serine 130, serine 133, and serine 135 each carry the phosphoserine modification. Residues 176-186 (PQKTGPQSAES) show a composition bias toward polar residues. Lysine 178 participates in a covalent cross-link: Glycyl lysine isopeptide (Lys-Gly) (interchain with G-Cter in SUMO2). A phosphoserine mark is found at serine 183 and serine 187. Threonine 192 carries the phosphothreonine modification. Serine 222 bears the Phosphoserine mark. The stretch at 273–350 (SNLKEELIKM…LRKAAYFLSN (78 aa)) forms a coiled coil. A Nuclear localization signal motif is present at residues 293-310 (KRKNAKIISNIEKKRQRL).

This sequence belongs to the CENP-U/AME1 family. Component of the CENPA-NAC complex, at least composed of CENPA, CENPC, CENPH, CENPM, CENPN, CENPT and CENPU. The CENPA-NAC complex interacts with the CENPA-CAD complex, composed of CENPI, CENPK, CENPL, CENPO, CENPP, CENPQ, CENPR and CENPS. Interacts with MLF1. In terms of processing, phosphorylated by PLK1 at Thr-72, creating a self-tethering site that specifically interacts with the polo-box domain of PLK1.

The protein localises to the cytoplasm. It is found in the nucleus. It localises to the chromosome. The protein resides in the centromere. Its subcellular location is the kinetochore. Its function is as follows. Component of the CENPA-NAC (nucleosome-associated) complex, a complex that plays a central role in assembly of kinetochore proteins, mitotic progression and chromosome segregation. The CENPA-NAC complex recruits the CENPA-CAD (nucleosome distal) complex and may be involved in incorporation of newly synthesized CENPA into centromeres. Plays an important role in the correct PLK1 localization to the mitotic kinetochores. A scaffold protein responsible for the initial recruitment and maintenance of the kinetochore PLK1 population until its degradation. Involved in transcriptional repression. The protein is Centromere protein U (CENPU) of Bos taurus (Bovine).